The sequence spans 61 residues: Large ribosomal subunit protein uL30 (61 aa).

Belongs to the universal ribosomal protein uL30 family. As to quaternary structure, part of the 50S ribosomal subunit.

This chain is Large ribosomal subunit protein uL30, found in Chlorobaculum parvum (strain DSM 263 / NCIMB 8327) (Chlorobium vibrioforme subsp. thiosulfatophilum).